Reading from the N-terminus, the 740-residue chain is Ion-translocating oxidoreductase complex subunit C (740 aa).

2 consecutive 4Fe-4S ferredoxin-type domains span residues 369-397 and 407-436; these read GEPQEEQSCIRCSACADACPADLLPQQLY and KATTHNIADCIECGACAWVCPSNIPLVQYF. [4Fe-4S] cluster-binding residues include cysteine 377, cysteine 380, cysteine 383, cysteine 387, cysteine 416, cysteine 419, cysteine 422, and cysteine 426. Residues 602 to 716 are disordered; it reads KLEQQQANAE…EPEEQVDPRK (115 aa).

Belongs to the 4Fe4S bacterial-type ferredoxin family. RnfC subfamily. In terms of assembly, the complex is composed of six subunits: RsxA, RsxB, RsxC, RsxD, RsxE and RsxG. [4Fe-4S] cluster serves as cofactor.

The protein resides in the cell inner membrane. Its function is as follows. Part of a membrane-bound complex that couples electron transfer with translocation of ions across the membrane. Required to maintain the reduced state of SoxR. This Escherichia coli O139:H28 (strain E24377A / ETEC) protein is Ion-translocating oxidoreductase complex subunit C.